A 371-amino-acid chain; its full sequence is Protein MxiG (371 aa).

Residues 127–141 (VFFFFAVIVVLIIIF) form a helical membrane-spanning segment.

The protein localises to the cell inner membrane. It is found in the cell outer membrane. Functionally, involved in the secretion of the Ipa antigens. Involved in the intracellular dissemination of Shigella. Part of the Mxi-Spa secretion apparatus. This chain is Protein MxiG (mxiG), found in Shigella flexneri.